Consider the following 113-residue polypeptide: Putative pterin-4-alpha-carbinolamine dehydratase (113 aa).

It belongs to the pterin-4-alpha-carbinolamine dehydratase family.

The catalysed reaction is (4aS,6R)-4a-hydroxy-L-erythro-5,6,7,8-tetrahydrobiopterin = (6R)-L-erythro-6,7-dihydrobiopterin + H2O. The chain is Putative pterin-4-alpha-carbinolamine dehydratase from Saccharophagus degradans (strain 2-40 / ATCC 43961 / DSM 17024).